The sequence spans 131 residues: Transcription antitermination protein NusB (131 aa).

It belongs to the NusB family.

Its function is as follows. Involved in transcription antitermination. Required for transcription of ribosomal RNA (rRNA) genes. Binds specifically to the boxA antiterminator sequence of the ribosomal RNA (rrn) operons. The chain is Transcription antitermination protein NusB from Bacillus subtilis (strain 168).